The chain runs to 943 residues: MSEDDLKVPEELFKDVKFYVVGDIDQKVVQLLKSGKGKEVSYNALATHIIAEDGDNPEVGESREVFDLPVVKPSWVILSVKCGDLLPVTGFSPESGQVFFGVTACLPHLAEDLNALWAFITFYGGDCQLHFNKKCTHLVVPEPKGAKYECALRHNNIKIVTPEWILDSVKEKNRKDEMLYHPRLTLYDAPEEEGSEYENERSSRSEGSYSDRRSPHSRRSSPTSSRDASPAGRRSPSTKHERKSELMFDDSDDSSPEKEDRNLNWTPAEVLPPGPAKRRLQPGKETGLINLCANVPPVPGSFGPPDARMVGAGAGAGGGVPMGVERLEVMSEWNSAARTLRNITNNTDTQQPSRPSNVAHIIQSFSASSKGVVDHMGNQGQSGIPNQLLLKAQQQLPPEAQQQLLQQQQQQSHQLQQQQQQHQMAQQHPMMLPQVMQMHHHQQQQQHQPPPQQQQQQQNQQGFPQMPPQSHQFLQQQMHQQMYSQHQQQQQQQQQQQQQHAFPQQMRPQQLPRLPLQHQQQHVLQQQLQLQQQHRLQLQLQQQQQQQQQQQQQQQQQQQQQQQQQQQQQQQQKQQQQQQQNQQQMHQQYLQQQQHFLQQQLQQQHMQQLQQQQQMQQQQQQHLQNQQPLQHQNQQVNPHQTQTMLQPPITSAQLFGHEPGHDIPEEGFLVGCIFAIADYPEQMADKQLLATWKRIIQLNGGTVDSALNRCTHLLCESQVSNTYLQALREGKRCVTAHWLNTVLKKKKMVPPHRTLHLPFSFPPGAKPCAQHIISVTGFVDSDRDDLKLMAYLAGARYTGYLCRSNTVLICKEPSGLKYEKAKEWRIPCVNAQWLCDILLGNFEALRQIQHSKYTQFNLPDPLAPNHHLVHNLLSAWRIPVKISPEALASLRLQLKQKQADVSVQPPSKRPKLEELPTPTKSFHLIQHLTSFSQALNLCRLSST.

BRCT domains follow at residues V8–P93 and E94–P182. Disordered regions lie at residues P190 to Q281, A400 to R507, and Q620 to T641. Residues E198–S214 are compositionally biased toward basic and acidic residues. Positions S220–P230 are enriched in low complexity. Over residues Q620–Q635 the composition is skewed to low complexity. 2 consecutive BRCT domains span residues P664 to H756 and P763 to S851. A Nuclear localization signal motif is present at residues G730–K747.

As to quaternary structure, interacts with smad2 via its last three BRCT domain-containing regions in an activin signal-dependent manner.

It localises to the nucleus. Its function is as follows. Involved in DNA damage response. May function as transcriptional cofactor in TGF beta signaling. Accentuates Smad2-dependent transcription. The sequence is that of PAX-interacting protein 1 (paxip1) from Danio rerio (Zebrafish).